The following is a 199-amino-acid chain: Dephospho-CoA kinase (199 aa).

The region spanning 3–199 (VLGLTGSIGM…AAAKMPRRRD (197 aa)) is the DPCK domain. 11–16 (GMGKST) provides a ligand contact to ATP.

This sequence belongs to the CoaE family.

It localises to the cytoplasm. It catalyses the reaction 3'-dephospho-CoA + ATP = ADP + CoA + H(+). The protein operates within cofactor biosynthesis; coenzyme A biosynthesis; CoA from (R)-pantothenate: step 5/5. Its function is as follows. Catalyzes the phosphorylation of the 3'-hydroxyl group of dephosphocoenzyme A to form coenzyme A. The protein is Dephospho-CoA kinase of Rhodopseudomonas palustris (strain ATCC BAA-98 / CGA009).